The primary structure comprises 239 residues: Ribosomal RNA small subunit methyltransferase G (239 aa).

S-adenosyl-L-methionine contacts are provided by residues Gly77, Phe82, 128-129, and Arg147; that span reads AE.

It belongs to the methyltransferase superfamily. RNA methyltransferase RsmG family.

It localises to the cytoplasm. Its function is as follows. Specifically methylates the N7 position of guanine in position 535 of 16S rRNA. This Bacillus anthracis (strain A0248) protein is Ribosomal RNA small subunit methyltransferase G.